The sequence spans 3503 residues: Protein dachsous (3503 aa).

The first 20 residues, 1-20, serve as a signal peptide directing secretion; it reads MLRSSLLILLAIVLLGSSQA. Residues 21–3045 are Extracellular-facing; sequence ASHDQERERK…SSSGSIGDWA (3025 aa). Cadherin domains follow at residues 22-121, 122-233, 234-340, 345-451, 452-558, 559-662, 663-774, 775-878, 879-983, 984-1100, 1101-1203, 1205-1312, 1313-1432, and 1433-1549; these read SHDQ…APTF, PQTS…QPIF, NQSR…QPTI, LSDD…PPEF, EQDL…EPIF, DQSF…RPVF, YPRE…PPIF, EKAR…APEF, EASM…PPVF, EKDE…DPKF, QKSK…APEI, DPQE…RPTF, TSSS…APEW, and PQDP…APHF. N220 and N234 each carry an N-linked (GlcNAc...) asparagine glycan. S236 is subject to Phosphoserine. N245, N381, and N416 each carry an N-linked (GlcNAc...) asparagine glycan. 3 N-linked (GlcNAc...) asparagine glycosylation sites follow: N564, N594, and N743. N966, N991, N1006, N1029, N1143, and N1236 each carry an N-linked (GlcNAc...) asparagine glycan. Residues N1453, N1479, N1524, and N1553 are each glycosylated (N-linked (GlcNAc...) asparagine). Cadherin domains follow at residues 1556 to 1666, 1667 to 1794, 1796 to 1899, 1900 to 2004, 2005 to 2111, 2114 to 2269, 2270 to 2375, 2375 to 2479, 2489 to 2595, 2596 to 2699, 2701 to 2809, 2810 to 2916, and 2919 to 3028; these read GGKT…PPRF, LQAV…SPEF, PGSC…APRF, KLSK…RPIF, ERYP…TPVL, QNET…SPKF, SQKQ…QPTF, FPPN…APVF, AILP…RSQF, LQNQ…FPIF, RSAK…EPKF, PLTE…TPQF, and RTYR…HPGT. N-linked (GlcNAc...) asparagine glycans are attached at residues N1700, N1884, and N1940. An N-linked (GlcNAc...) asparagine glycan is attached at N2115. Residues 2193 to 2225 form a disordered region; sequence GRALHYEEEIDESSEEDPNNSTRSQRALTSSSF. Acidic residues predominate over residues 2200–2210; it reads EEIDESSEEDP. N-linked (GlcNAc...) asparagine glycosylation is found at N2211 and N2212. Residues 2211–2225 show a composition bias toward polar residues; it reads NNSTRSQRALTSSSF. N-linked (GlcNAc...) asparagine glycans are attached at residues N2421, N2511, N2520, N2547, N2588, and N2678. Residues N2845 and N2967 are each glycosylated (N-linked (GlcNAc...) asparagine). The chain crosses the membrane as a helical span at residues 3046–3066; sequence IGLLVAFLLVLCAAAGIFLFI. At 3067-3503 the chain is on the cytoplasmic side; that stretch reads HMRSRKPRNA…SQRGNVGTRM (437 aa). 3 disordered regions span residues 3114–3195, 3360–3404, and 3431–3503; these read AGAA…GRIS, LSEH…IPPP, and LPRS…GTRM. Composition is skewed to low complexity over residues 3133-3159 and 3363-3372; these read GAHA…SGRG and HSGSGASSSA. Pro residues predominate over residues 3391 to 3404; that stretch reads KPPPSAPPTHIPPP. Residues 3440–3463 are compositionally biased toward low complexity; sequence ASGSFSTSSAMSPSFSPSLSPLAT. Residues S3465 and S3469 each carry the phosphoserine modification. The span at 3492-3503 shows a compositional bias: polar residues; the sequence is QPSQRGNVGTRM.

Interacts (via cytoplasmic region) with Myo31DF. In terms of processing, phosphorylated by fj on Ser/Thr of cadherin domains. In terms of tissue distribution, expressed in embryonic ectoderm. In larvae, expression is restricted to imaginal disks and brain.

The protein resides in the cell membrane. The protein localises to the cell junction. Its function is as follows. Required for normal morphogenesis of adult structures derived from imaginal disks. Plays a role in planar cell polarity and in determining body left-right asymmetry. Expression in segment H1 of the imaginal ring and interaction with Myo31DF are required to induce changes of cell shape and orientation in segment H2, which then gives rise to normal, dextral looping of the adult hindgut. The protein is Protein dachsous (ds) of Drosophila melanogaster (Fruit fly).